The following is a 248-amino-acid chain: MGYNKSLRYSRHNGTTCVIDNKHLKTLGSVLGDVRHKEELIREAQFDPIKDIANQYMVTEDPFRGPGKNVKITLFKEIRRIQPDTMKLVCNWSGKEFLRETWTRFISEEFPITTDQEIMDLWFELQLRPMQPNRCYKFTMQYALAANPDYVAHDVIRQHDPYYVGPDNRERINLSKRGLAFPLTCLQSIYNENFEEFFDQVLWPYFHRPLVYVGTTSAEIEEVMIEVALLFKIKEFAPDVPLFTGPAY.

Belongs to the polyhedrin family.

Component of the virus occlusion bodies, which are large proteinaceous structures, that protect the virus from the outside environment for extended periods until they are ingested by insect larvae. This chain is Granulin, found in Trichoplusia ni (Cabbage looper).